The sequence spans 435 residues: tRNA-2-methylthio-N(6)-dimethylallyladenosine synthase (435 aa).

Residues 5-120 (KKLFIETLGC…ISEVLHKERA (116 aa)) form the MTTase N-terminal domain. [4Fe-4S] cluster is bound by residues Cys-14, Cys-51, Cys-83, Cys-152, Cys-156, and Cys-159. The region spanning 138 to 372 (RTSPYKAYIN…NLAVNILDEK (235 aa)) is the Radical SAM core domain. The TRAM domain maps to 374–435 (KTHLGKIYRV…RTILSGEIVG (62 aa)).

It belongs to the methylthiotransferase family. MiaB subfamily. As to quaternary structure, monomer. [4Fe-4S] cluster serves as cofactor.

It is found in the cytoplasm. It catalyses the reaction N(6)-dimethylallyladenosine(37) in tRNA + (sulfur carrier)-SH + AH2 + 2 S-adenosyl-L-methionine = 2-methylsulfanyl-N(6)-dimethylallyladenosine(37) in tRNA + (sulfur carrier)-H + 5'-deoxyadenosine + L-methionine + A + S-adenosyl-L-homocysteine + 2 H(+). Functionally, catalyzes the methylthiolation of N6-(dimethylallyl)adenosine (i(6)A), leading to the formation of 2-methylthio-N6-(dimethylallyl)adenosine (ms(2)i(6)A) at position 37 in tRNAs that read codons beginning with uridine. This is tRNA-2-methylthio-N(6)-dimethylallyladenosine synthase from Sulfurimonas denitrificans (strain ATCC 33889 / DSM 1251) (Thiomicrospira denitrificans (strain ATCC 33889 / DSM 1251)).